The chain runs to 310 residues: p-hydroxybenzoic acid efflux pump subunit AaeA (310 aa).

A helical membrane pass occupies residues A12–Y32.

It belongs to the membrane fusion protein (MFP) (TC 8.A.1) family.

The protein localises to the cell inner membrane. Functionally, forms an efflux pump with AaeB. The sequence is that of p-hydroxybenzoic acid efflux pump subunit AaeA from Salmonella schwarzengrund (strain CVM19633).